The following is a 470-amino-acid chain: Uronate isomerase (470 aa).

It belongs to the metallo-dependent hydrolases superfamily. Uronate isomerase family.

The catalysed reaction is D-glucuronate = D-fructuronate. The enzyme catalyses aldehydo-D-galacturonate = keto-D-tagaturonate. The protein operates within carbohydrate metabolism; pentose and glucuronate interconversion. This is Uronate isomerase from Vibrio parahaemolyticus serotype O3:K6 (strain RIMD 2210633).